We begin with the raw amino-acid sequence, 319 residues long: Aliphatic sulfonates import ATP-binding protein SsuB 1 (319 aa).

The region spanning 63-282 (VTLSGVSKRF…ARASAAFAAL (220 aa)) is the ABC transporter domain. ATP is bound at residue 95 to 102 (GRSGCGKS).

It belongs to the ABC transporter superfamily. Aliphatic sulfonates importer (TC 3.A.1.17.2) family. As to quaternary structure, the complex is composed of two ATP-binding proteins (SsuB), two transmembrane proteins (SsuC) and a solute-binding protein (SsuA).

It localises to the cell inner membrane. The catalysed reaction is ATP + H2O + aliphatic sulfonate-[sulfonate-binding protein]Side 1 = ADP + phosphate + aliphatic sulfonateSide 2 + [sulfonate-binding protein]Side 1.. Functionally, part of the ABC transporter complex SsuABC involved in aliphatic sulfonates import. Responsible for energy coupling to the transport system. This chain is Aliphatic sulfonates import ATP-binding protein SsuB 1, found in Burkholderia lata (strain ATCC 17760 / DSM 23089 / LMG 22485 / NCIMB 9086 / R18194 / 383).